We begin with the raw amino-acid sequence, 660 residues long: Probable E3 ubiquitin ligase complex SCF subunit sconB (660 aa).

Residues 1-13 (MHNENSVLRDAKE) are compositionally biased toward basic and acidic residues. Disordered regions lie at residues 1–34 (MHNE…MTPY) and 86–108 (LGTG…RRQA). Residues 175 to 221 (IDFITALPPEISFKILSYLDTASLCRAAQVSRGWKCLADDDVVWHRM) form the F-box domain. WD repeat units lie at residues 340–379 (GHTN…RTLT), 381–419 (HTSG…STYT), 421–457 (HLGG…TFLL), 459–500 (GHSD…RTFQ), 542–586 (SQVS…CLRT), 587–626 (FFGH…CERT), and 629–660 (GHSG…SFKN). The tract at residues 521-553 (GHDASHEEDSNASVSGDESPSSQVSCSPTAAFF) is disordered. Residues 531–548 (NASVSGDESPSSQVSCSP) show a composition bias toward polar residues.

This sequence belongs to the WD repeat MET30/SCONB/SCON-2 family. In terms of assembly, component of the SCF(sconB) E3 ubiquitin ligase complex.

It functions in the pathway protein modification; protein ubiquitination. In terms of biological role, component of the SCF(sconB) E3 ubiquitin ligase complex involved in the regulation of sulfur metabolite repression, probably by mediating the inactivation or degradation of the metR transcription factor. This is Probable E3 ubiquitin ligase complex SCF subunit sconB (sconB) from Talaromyces marneffei (strain ATCC 18224 / CBS 334.59 / QM 7333) (Penicillium marneffei).